The primary structure comprises 85 residues: V-type proton ATPase subunit f (85 aa).

A run of 2 helical transmembrane segments spans residues 13–33 (CTGL…LFSI) and 56–76 (CLGA…QVIV).

In terms of assembly, V-ATPase is a heteromultimeric enzyme composed of a peripheral catalytic V1 complex (components A to H) attached to an integral membrane V0 proton pore complex (components: a, c, c', c'', d, e, f and VOA1).

It localises to the endoplasmic reticulum membrane. Its function is as follows. Accessory component of the V0 complex of vacuolar(H+)-ATPase (V-ATPase), a multisubunit enzyme composed of a peripheral complex (V1) that hydrolyzes ATP and a membrane integral complex (V0) that translocates protons. V-ATPase is responsible for acidifying and maintaining the pH of intracellular compartments. The chain is V-type proton ATPase subunit f from Schizosaccharomyces pombe (strain 972 / ATCC 24843) (Fission yeast).